The sequence spans 268 residues: Small ribosomal subunit protein eS1 (268 aa).

The tract at residues 1-21 (MAVGKNKGLSKGGKKGGKKKV) is disordered.

The protein belongs to the eukaryotic ribosomal protein eS1 family. In terms of assembly, component of the small ribosomal subunit. Mature ribosomes consist of a small (40S) and a large (60S) subunit. The 40S subunit contains about 33 different proteins and 1 molecule of RNA (18S). The 60S subunit contains about 49 different proteins and 3 molecules of RNA (28S, 5.8S and 5S).

The protein localises to the cytoplasm. Its function is as follows. Essential for oogenesis; required for late follicle cell development. The chain is Small ribosomal subunit protein eS1 from Drosophila mojavensis (Fruit fly).